Consider the following 484-residue polypeptide: UDP-N-acetylmuramate--L-alanine ligase (484 aa).

Residue 127-133 coordinates ATP; sequence GTHGKTT.

This sequence belongs to the MurCDEF family.

The protein resides in the cytoplasm. The enzyme catalyses UDP-N-acetyl-alpha-D-muramate + L-alanine + ATP = UDP-N-acetyl-alpha-D-muramoyl-L-alanine + ADP + phosphate + H(+). It functions in the pathway cell wall biogenesis; peptidoglycan biosynthesis. In terms of biological role, cell wall formation. The protein is UDP-N-acetylmuramate--L-alanine ligase of Shewanella amazonensis (strain ATCC BAA-1098 / SB2B).